The primary structure comprises 136 residues: Large ribosomal subunit protein uL16 (136 aa).

This sequence belongs to the universal ribosomal protein uL16 family. As to quaternary structure, part of the 50S ribosomal subunit.

Functionally, binds 23S rRNA and is also seen to make contacts with the A and possibly P site tRNAs. This chain is Large ribosomal subunit protein uL16, found in Buchnera aphidicola subsp. Baizongia pistaciae (strain Bp).